A 254-amino-acid polypeptide reads, in one-letter code: tRNA uridine(34) hydroxylase (254 aa).

Positions 123–217 (QDPNVILLDT…YLESIPESES (95 aa)) constitute a Rhodanese domain. The Cysteine persulfide intermediate role is filled by Cys177.

This sequence belongs to the TrhO family.

The enzyme catalyses uridine(34) in tRNA + AH2 + O2 = 5-hydroxyuridine(34) in tRNA + A + H2O. In terms of biological role, catalyzes oxygen-dependent 5-hydroxyuridine (ho5U) modification at position 34 in tRNAs. This Legionella pneumophila (strain Corby) protein is tRNA uridine(34) hydroxylase.